Reading from the N-terminus, the 252-residue chain is Pantothenate synthetase (252 aa).

29 to 36 (MGNLHAGH) is an ATP binding site. The active-site Proton donor is the histidine 36. Glutamine 60 is a binding site for (R)-pantoate. Glutamine 60 lines the beta-alanine pocket. 146–149 (GEKD) serves as a coordination point for ATP. Position 152 (glutamine 152) interacts with (R)-pantoate. ATP-binding positions include valine 175 and 183–186 (CSSR).

The protein belongs to the pantothenate synthetase family. As to quaternary structure, homodimer.

The protein resides in the cytoplasm. The enzyme catalyses (R)-pantoate + beta-alanine + ATP = (R)-pantothenate + AMP + diphosphate + H(+). The protein operates within cofactor biosynthesis; (R)-pantothenate biosynthesis; (R)-pantothenate from (R)-pantoate and beta-alanine: step 1/1. Catalyzes the condensation of pantoate with beta-alanine in an ATP-dependent reaction via a pantoyl-adenylate intermediate. This chain is Pantothenate synthetase, found in Legionella pneumophila subsp. pneumophila (strain Philadelphia 1 / ATCC 33152 / DSM 7513).